A 214-amino-acid chain; its full sequence is Large ribosomal subunit protein uL3 (214 aa).

Positions 133-155 (ATHGNSRSHRVPGSTGQCQSPGR) are disordered. N5-methylglutamine is present on glutamine 151.

Belongs to the universal ribosomal protein uL3 family. In terms of assembly, part of the 50S ribosomal subunit. Forms a cluster with proteins L14 and L19. Post-translationally, methylated by PrmB.

One of the primary rRNA binding proteins, it binds directly near the 3'-end of the 23S rRNA, where it nucleates assembly of the 50S subunit. This is Large ribosomal subunit protein uL3 from Cellvibrio japonicus (strain Ueda107) (Pseudomonas fluorescens subsp. cellulosa).